The following is a 201-amino-acid chain: Glycerol-3-phosphate acyltransferase (201 aa).

A run of 5 helical transmembrane segments spans residues 10-30 (MLIG…GLIL), 60-80 (LAAA…LIAA), 86-106 (AAIA…WIGF), 116-136 (LGVL…AWIV), and 166-186 (ALAA…RANI).

Belongs to the PlsY family. As to quaternary structure, probably interacts with PlsX.

The protein resides in the cell inner membrane. The catalysed reaction is an acyl phosphate + sn-glycerol 3-phosphate = a 1-acyl-sn-glycero-3-phosphate + phosphate. It participates in lipid metabolism; phospholipid metabolism. Its function is as follows. Catalyzes the transfer of an acyl group from acyl-phosphate (acyl-PO(4)) to glycerol-3-phosphate (G3P) to form lysophosphatidic acid (LPA). This enzyme utilizes acyl-phosphate as fatty acyl donor, but not acyl-CoA or acyl-ACP. In Brucella canis (strain ATCC 23365 / NCTC 10854 / RM-666), this protein is Glycerol-3-phosphate acyltransferase.